A 196-amino-acid polypeptide reads, in one-letter code: SAGA-associated factor 11 homolog (196 aa).

Residues 1 to 22 (MSAANMPTTTGAQGSGNQVPTT) are disordered. The SGF11-type zinc-finger motif lies at 106–127 (CTCPNCDRLVAAARFAPHLEKC). The interval 141-196 (RLATKEGATSAHLHSSGNTGGTDDEDDVDWSSDKRRKKSNQNSRNNGSKKNNGKTF) is disordered. Position 172 is a phosphoserine (serine 172). Residues 180–196 (NQNSRNNGSKKNNGKTF) show a composition bias toward low complexity.

Belongs to the SGF11 family. In terms of assembly, component of some SAGA transcription coactivator-HAT complexes, at least composed of Ada2b, not/nonstop, Pcaf/Gcn5, Sgf11 and Spt3. Within the SAGA complex, Sgf11, e(y)2, and not/nonstop form an additional subcomplex of SAGA called the DUB module (deubiquitination module). Interacts directly with not/nonstop. Interacts with the AMEX complex component xmas-2. Interacts with Cbp80; important for promoter recruitment of Sgf11 that is not associated with the DUB module.

The protein resides in the nucleus. Its subcellular location is the nucleoplasm. It localises to the cytoplasm. Functionally, component of the transcription regulatory histone acetylation (HAT) complex SAGA, a multiprotein complex that activates transcription by remodeling chromatin and mediating histone acetylation and deubiquitination. Within the SAGA complex, participates in a subcomplex that specifically deubiquitinates histone H2B. The SAGA complex is recruited to specific gene promoters by activators, where it is required for transcription. Required for nuclear receptor-mediated transactivation. Binds independently on SAGA to promoters in an RNA-dependent manner. Binds to mRNA and is essential for total mRNA export from the nucleus. Required to counteract heterochromatin silencing. Controls the development of neuronal connectivity in visual system by being required for accurate axon targeting in the optic lobe. Required for expression of ecdysone-induced genes such as br/broad. The protein is SAGA-associated factor 11 homolog of Drosophila simulans (Fruit fly).